Consider the following 267-residue polypeptide: Apolipoprotein A-I (267 aa).

The first 18 residues, 1 to 18, serve as a signal peptide directing secretion; it reads MKAAVLTLAVLFLTGSQA. Repeat copies occupy residues 68-89 and 90-111. Positions 68–267 are 10 X approximate tandem repeats; sequence LKLLDNWDSV…EEYTKKLNTQ (200 aa). Met110 is subject to Methionine sulfoxide. The 3; half-length repeat unit spans residues 112-122; it reads KDLEEVKAKVQ. Repeat copies occupy residues 123–144, 145–166, 167–188, 189–210, and 211–232. Position 136 is a methionine sulfoxide (Met136). A 9; half-length repeat occupies 233 to 243; the sequence is PALEDLRQGLL. The stretch at 244–267 is repeat 10; that stretch reads PVLESFKVSFLSALEEYTKKLNTQ.

The protein belongs to the apolipoprotein A1/A4/E family. As to quaternary structure, homodimer. Interacts with APOA1BP and CLU. Component of a sperm activating protein complex (SPAP), consisting of APOA1, an immunoglobulin heavy chain, an immunoglobulin light chain and albumin. Interacts with NDRG1. Interacts with SCGB3A2. Interacts with NAXE and YJEFN3. In terms of processing, glycosylated. Palmitoylated. Post-translationally, phosphorylation sites are present in the extracellular medium. In terms of tissue distribution, major protein of plasma HDL, also found in chylomicrons.

The protein resides in the secreted. Participates in the reverse transport of cholesterol from tissues to the liver for excretion by promoting cholesterol efflux from tissues and by acting as a cofactor for the lecithin cholesterol acyltransferase (LCAT). As part of the SPAP complex, activates spermatozoa motility. This Pan troglodytes (Chimpanzee) protein is Apolipoprotein A-I (APOA1).